The primary structure comprises 173 residues: Ribosomal RNA large subunit methyltransferase H (173 aa).

The S-adenosyl-L-methionine site is built by L89 and G121.

The protein belongs to the RNA methyltransferase RlmH family. In terms of assembly, homodimer.

The protein localises to the cytoplasm. It catalyses the reaction pseudouridine(1915) in 23S rRNA + S-adenosyl-L-methionine = N(3)-methylpseudouridine(1915) in 23S rRNA + S-adenosyl-L-homocysteine + H(+). Specifically methylates the pseudouridine at position 1915 (m3Psi1915) in 23S rRNA. In Chelativorans sp. (strain BNC1), this protein is Ribosomal RNA large subunit methyltransferase H.